A 161-amino-acid chain; its full sequence is 3-hydroxyacyl-[acyl-carrier-protein] dehydratase FabZ (161 aa).

Residue histidine 66 is part of the active site.

The protein belongs to the thioester dehydratase family. FabZ subfamily.

The protein resides in the cytoplasm. It catalyses the reaction a (3R)-hydroxyacyl-[ACP] = a (2E)-enoyl-[ACP] + H2O. In terms of biological role, involved in unsaturated fatty acids biosynthesis. Catalyzes the dehydration of short chain beta-hydroxyacyl-ACPs and long chain saturated and unsaturated beta-hydroxyacyl-ACPs. This Gluconacetobacter diazotrophicus (strain ATCC 49037 / DSM 5601 / CCUG 37298 / CIP 103539 / LMG 7603 / PAl5) protein is 3-hydroxyacyl-[acyl-carrier-protein] dehydratase FabZ.